The following is a 280-amino-acid chain: Alpha-methyl-mannoside-specific lectin (280 aa).

An N-terminal signal peptide occupies residues 1–26 (MAISKKILPLLSIATIFLLLLNKAHS). A carbohydrate-binding residues include Asp-114 and Gly-134. Mn(2+) contacts are provided by Glu-156 and Asp-158. Positions 158 and 160 each coordinate Ca(2+). Residues Ser-165 and Asn-166 each coordinate a carbohydrate. Ca(2+) is bound by residues Asn-166 and Asp-169. Residues Asp-169 and His-174 each coordinate Mn(2+). A carbohydrate contacts are provided by Gly-248 and Gln-250.

The protein belongs to the leguminous lectin family. As to quaternary structure, homodimer. Post-translationally, glycosylated.

Functionally, alpha-methyl-D-mannoside-specific lectin. Has hemagglutinating activity towards rabbit erythrocytes. Binds to cytokinins and significantly inhibits physiological effects of cytokinin activity such as cotyledon expansion and delayed leaf senescence. This chain is Alpha-methyl-mannoside-specific lectin, found in Arachis hypogaea (Peanut).